Here is a 641-residue protein sequence, read N- to C-terminus: MASTYSTPRWRTALLGGFLTTLPWLSSGMAGKTQADYFIKSLPGAPEPLLKMHAGHIEVDAEHNGNLFFWHYENRHIADRQRTVLWLNGGPGCSSMDGALMEVGPYRVQADGNLHYNNGSWDEFANLLFVDQPVGTGFSYVNTDSYLTELDQMANHMVIFLEKWFGLFPEYEHDDLYIAGESYAGQHIPYIARAIVKRNKEQGKTPWALKGLLIGNGWISPVDQYLSYIPYAYQNGLMKADSDMAKRVENQQRICIKKLEDGGMDAVDTNDCEQIMVNILEETKDRKADRMNQCVNMYDIRLRDDASCGMNWPPDLASVTPYLRRPDVIQALHINPDKKTGWQECNGAVSGHFRAKKSEPSVRFLPELIPEVPTLLFSGDKDFICNHIGTEEMIKNMQWSGGKGFEVTPGVWAPKQDWTFEGEAAGSWQEARNLTYVVFYNSSHMVPFDYPRRTRDMLDRFMGVDIEQIGGVPSDSRIDGEKGPLTSVGDHPNSTRAEEDKATDVKQAEWKAYYRSGQVALVVVVIVAALWGIFLWRSRRRHTKTAYQGDDGDEGRESLLTGMGLDNFRRKERRSDLEAADFDERELDDLDGASKKPGNGYASLGSEKERQSHNDSTFSLGGDSDDEAGSSDGPKRKGGSS.

The first 35 residues, 1–35, serve as a signal peptide directing secretion; sequence MASTYSTPRWRTALLGGFLTTLPWLSSGMAGKTQA. Topologically, residues 36-515 are lumenal; sequence DYFIKSLPGA…KQAEWKAYYR (480 aa). Asn-118 is a glycosylation site (N-linked (GlcNAc...) asparagine). Catalysis depends on residues Ser-182 and Asp-382. N-linked (GlcNAc...) asparagine glycans are attached at residues Asn-433 and Asn-441. His-444 is an active-site residue. The interval 472-502 is disordered; it reads VPSDSRIDGEKGPLTSVGDHPNSTRAEEDKA. Asn-493 carries an N-linked (GlcNAc...) asparagine glycan. A helical transmembrane segment spans residues 516-536; that stretch reads SGQVALVVVVIVAALWGIFLW. The Cytoplasmic segment spans residues 537 to 641; sequence RSRRRHTKTA…DGPKRKGGSS (105 aa). The interval 585–641 is disordered; sequence RELDDLDGASKKPGNGYASLGSEKERQSHNDSTFSLGGDSDDEAGSSDGPKRKGGSS.

It belongs to the peptidase S10 family.

The protein resides in the golgi apparatus. The protein localises to the trans-Golgi network membrane. It catalyses the reaction Preferential release of a C-terminal arginine or lysine residue.. Its function is as follows. Protease with a carboxypeptidase B-like function involved in the C-terminal processing of the lysine and arginine residues from protein precursors. Promotes cell fusion and is involved in the programmed cell death. This Leptosphaeria maculans (strain JN3 / isolate v23.1.3 / race Av1-4-5-6-7-8) (Blackleg fungus) protein is Pheromone-processing carboxypeptidase KEX1 (KEX1).